The chain runs to 72 residues: Protein kish-A (72 aa).

The first 26 residues, M1–S26, serve as a signal peptide directing secretion. Residues L27–K53 are Extracellular-facing. N-linked (GlcNAc...) asparagine glycosylation occurs at N35. The helical transmembrane segment at S54–V71 threads the bilayer. Residue Q72 is a topological domain, cytoplasmic.

This sequence belongs to the KISH family.

The protein localises to the golgi apparatus membrane. Its function is as follows. Involved in the early part of the secretory pathway. The chain is Protein kish-A (TMEM167A) from Gallus gallus (Chicken).